Reading from the N-terminus, the 329-residue chain is GTP 3',8-cyclase (329 aa).

The 227-residue stretch at 8–234 (VFARKFYYLR…QLRQRSDGPA (227 aa)) folds into the Radical SAM core domain. Arg17 contributes to the GTP binding site. [4Fe-4S] cluster contacts are provided by Cys24 and Cys28. Tyr30 contacts S-adenosyl-L-methionine. [4Fe-4S] cluster is bound at residue Cys31. Arg68 provides a ligand contact to GTP. Gly72 contributes to the S-adenosyl-L-methionine binding site. Thr99 lines the GTP pocket. Ser123 is an S-adenosyl-L-methionine binding site. Position 160 (Lys160) interacts with GTP. Met194 contacts S-adenosyl-L-methionine. 2 residues coordinate [4Fe-4S] cluster: Cys257 and Cys260. 262–264 (RLR) provides a ligand contact to GTP. Cys274 is a binding site for [4Fe-4S] cluster.

This sequence belongs to the radical SAM superfamily. MoaA family. As to quaternary structure, monomer and homodimer. [4Fe-4S] cluster is required as a cofactor.

It carries out the reaction GTP + AH2 + S-adenosyl-L-methionine = (8S)-3',8-cyclo-7,8-dihydroguanosine 5'-triphosphate + 5'-deoxyadenosine + L-methionine + A + H(+). The protein operates within cofactor biosynthesis; molybdopterin biosynthesis. Functionally, catalyzes the cyclization of GTP to (8S)-3',8-cyclo-7,8-dihydroguanosine 5'-triphosphate. The chain is GTP 3',8-cyclase from Shigella flexneri.